Consider the following 1946-residue polypeptide: Integrin beta-like protein E (1946 aa).

A signal peptide spans 1-22 (MNNLFKFLFVLLAIFCPPISDL). The Extracellular portion of the chain corresponds to 23 to 1875 (VVSHGVPQQH…ATTQTTNNKT (1853 aa)). N-linked (GlcNAc...) asparagine glycosylation is found at Asn107, Asn134, and Asn203. One can recognise an EGF-like domain in the interval 423 to 460 (YGQNCDPTPPCDKGIPNEGILGDGKCMCINGYSGDKCD). 2 disulfides stabilise this stretch: Cys433–Cys448 and Cys450–Cys459. One can recognise a VWFA domain in the interval 514-699 (DVFVLVDVNV…AGLKSVLSNV (186 aa)). N-linked (GlcNAc...) asparagine glycans are attached at residues Asn705, Asn860, Asn1043, Asn1113, Asn1177, Asn1374, Asn1401, Asn1513, Asn1611, Asn1620, Asn1662, Asn1671, Asn1737, Asn1743, Asn1762, Asn1812, Asn1852, and Asn1873. A helical membrane pass occupies residues 1876–1896 (VLTGAIAGAAAGTALIAAAAW). The Cytoplasmic portion of the chain corresponds to 1897–1946 (KLLRKAAPPTDTFFSEAAFLGDGVNANPLYEQSASAAENPLYQSASDNTD).

The protein belongs to the SIB family. Interacts with talA/talin.

It localises to the membrane. In terms of biological role, implicated in cellular adhesion. In Dictyostelium discoideum (Social amoeba), this protein is Integrin beta-like protein E (sibE).